The sequence spans 117 residues: Large ribosomal subunit protein bL19 (117 aa).

Belongs to the bacterial ribosomal protein bL19 family.

In terms of biological role, this protein is located at the 30S-50S ribosomal subunit interface and may play a role in the structure and function of the aminoacyl-tRNA binding site. The protein is Large ribosomal subunit protein bL19 of Colwellia psychrerythraea (strain 34H / ATCC BAA-681) (Vibrio psychroerythus).